A 155-amino-acid chain; its full sequence is Small ribosomal subunit protein uS7cz/uS7cy (155 aa).

The protein belongs to the universal ribosomal protein uS7 family. Part of the 30S ribosomal subunit.

The protein resides in the plastid. The protein localises to the chloroplast. In terms of biological role, one of the primary rRNA binding proteins, it binds directly to 16S rRNA where it nucleates assembly of the head domain of the 30S subunit. The chain is Small ribosomal subunit protein uS7cz/uS7cy (rps7-A) from Chloranthus spicatus (Chulantree).